A 267-amino-acid chain; its full sequence is Acetylglutamate kinase (267 aa).

Substrate-binding positions include 53-54 (GG), Arg75, and Asn167.

This sequence belongs to the acetylglutamate kinase family. ArgB subfamily.

It localises to the cytoplasm. The enzyme catalyses N-acetyl-L-glutamate + ATP = N-acetyl-L-glutamyl 5-phosphate + ADP. It functions in the pathway amino-acid biosynthesis; L-arginine biosynthesis; N(2)-acetyl-L-ornithine from L-glutamate: step 2/4. Catalyzes the ATP-dependent phosphorylation of N-acetyl-L-glutamate. The polypeptide is Acetylglutamate kinase (Shewanella pealeana (strain ATCC 700345 / ANG-SQ1)).